The sequence spans 312 residues: uncharacterized protein (312 aa).

This is an uncharacterized protein from Saccharomyces cerevisiae (strain ATCC 204508 / S288c) (Baker's yeast).